The primary structure comprises 264 residues: Glutamate racemase (264 aa).

Residues 10 to 11 (DS) and 42 to 43 (YG) contribute to the substrate site. Cysteine 73 (proton donor/acceptor) is an active-site residue. 74-75 (NT) lines the substrate pocket. Cysteine 181 functions as the Proton donor/acceptor in the catalytic mechanism. 182 to 183 (TH) provides a ligand contact to substrate.

It belongs to the aspartate/glutamate racemases family.

The enzyme catalyses L-glutamate = D-glutamate. It participates in cell wall biogenesis; peptidoglycan biosynthesis. Its function is as follows. Provides the (R)-glutamate required for cell wall biosynthesis. The sequence is that of Glutamate racemase from Thermoanaerobacter pseudethanolicus (strain ATCC 33223 / 39E) (Clostridium thermohydrosulfuricum).